Here is a 699-residue protein sequence, read N- to C-terminus: Elongation factor G (699 aa).

Residues 8–288 form the tr-type G domain; it reads EDYRNFGIMA…AVVDYLPSPL (281 aa). GTP contacts are provided by residues 17–24, 86–90, and 140–143; these read AHIDAGKT, DTPGH, and NKMD.

This sequence belongs to the TRAFAC class translation factor GTPase superfamily. Classic translation factor GTPase family. EF-G/EF-2 subfamily.

The protein resides in the cytoplasm. In terms of biological role, catalyzes the GTP-dependent ribosomal translocation step during translation elongation. During this step, the ribosome changes from the pre-translocational (PRE) to the post-translocational (POST) state as the newly formed A-site-bound peptidyl-tRNA and P-site-bound deacylated tRNA move to the P and E sites, respectively. Catalyzes the coordinated movement of the two tRNA molecules, the mRNA and conformational changes in the ribosome. This is Elongation factor G from Rhizobium etli (strain ATCC 51251 / DSM 11541 / JCM 21823 / NBRC 15573 / CFN 42).